Reading from the N-terminus, the 268-residue chain is Cytolethal distending toxin subunit A (268 aa).

The N-terminal stretch at 1–19 (MQKIIVFILCCFMTFFLYA) is a signal peptide. C20 carries the N-palmitoyl cysteine lipid modification. C20 carries S-diacylglycerol cysteine lipidation. In terms of domain architecture, Ricin B-type lectin spans 112-252 (VSDFLTILGP…DNFDQQWFLT (141 aa)). Residues 129–140 (WALAQGNWIWGY) form a mediates binding to target cells region.

As to quaternary structure, heterotrimer of 3 subunits, CdtA, CdtB and CdtC.

Its subcellular location is the cell outer membrane. CDTs are cytotoxins which induce cell distension, growth arrest in G2/M phase, nucleus swelling, and chromatin fragmentation in HeLa cells. The protein is Cytolethal distending toxin subunit A (cdtA) of Campylobacter jejuni subsp. jejuni serotype O:2 (strain ATCC 700819 / NCTC 11168).